The chain runs to 388 residues: Succinate--CoA ligase [ADP-forming] subunit beta (388 aa).

The ATP-grasp domain maps to 9–244 (KEILRKYNVP…LDEEDANEIE (236 aa)). ATP is bound by residues K46, 53-55 (GRG), E99, A102, and E107. N199 and D213 together coordinate Mg(2+). Substrate contacts are provided by residues N264 and 321-323 (GIM).

The protein belongs to the succinate/malate CoA ligase beta subunit family. In terms of assembly, heterotetramer of two alpha and two beta subunits. Mg(2+) is required as a cofactor.

The enzyme catalyses succinate + ATP + CoA = succinyl-CoA + ADP + phosphate. It carries out the reaction GTP + succinate + CoA = succinyl-CoA + GDP + phosphate. It participates in carbohydrate metabolism; tricarboxylic acid cycle; succinate from succinyl-CoA (ligase route): step 1/1. Functionally, succinyl-CoA synthetase functions in the citric acid cycle (TCA), coupling the hydrolysis of succinyl-CoA to the synthesis of either ATP or GTP and thus represents the only step of substrate-level phosphorylation in the TCA. The beta subunit provides nucleotide specificity of the enzyme and binds the substrate succinate, while the binding sites for coenzyme A and phosphate are found in the alpha subunit. The protein is Succinate--CoA ligase [ADP-forming] subunit beta of Cupriavidus taiwanensis (strain DSM 17343 / BCRC 17206 / CCUG 44338 / CIP 107171 / LMG 19424 / R1) (Ralstonia taiwanensis (strain LMG 19424)).